The following is a 471-amino-acid chain: Argininosuccinate lyase (471 aa).

Belongs to the lyase 1 family. Argininosuccinate lyase subfamily.

Its subcellular location is the cytoplasm. It catalyses the reaction 2-(N(omega)-L-arginino)succinate = fumarate + L-arginine. Its pathway is amino-acid biosynthesis; L-arginine biosynthesis; L-arginine from L-ornithine and carbamoyl phosphate: step 3/3. In Parasynechococcus marenigrum (strain WH8102), this protein is Argininosuccinate lyase.